The primary structure comprises 660 residues: Bifunctional polymyxin resistance protein ArnA (660 aa).

Positions 1 to 304 (MKAVVFAYHD…TLGLVAGARL (304 aa)) are formyltransferase ArnAFT. Residue His-104 is the Proton donor; for formyltransferase activity of the active site. Residues Arg-114 and 136–140 (VKRAD) contribute to the (6R)-10-formyltetrahydrofolate site. Positions 314–660 (RRTRVLILGV…QSVEPGDAEE (347 aa)) are dehydrogenase ArnADH. NAD(+) is bound by residues Asp-347 and 368–369 (DI). Residues Ala-393, Tyr-398, and 432–433 (TS) contribute to the UDP-alpha-D-glucuronate site. Glu-434 serves as the catalytic Proton acceptor; for decarboxylase activity. UDP-alpha-D-glucuronate contacts are provided by residues Arg-460, Asn-492, 526 to 535 (KLIDGGRQKR), and Tyr-613. The active-site Proton donor; for decarboxylase activity is the Arg-619.

It in the N-terminal section; belongs to the Fmt family. UDP-L-Ara4N formyltransferase subfamily. This sequence in the C-terminal section; belongs to the NAD(P)-dependent epimerase/dehydratase family. UDP-glucuronic acid decarboxylase subfamily. In terms of assembly, homohexamer, formed by a dimer of trimers.

The enzyme catalyses UDP-alpha-D-glucuronate + NAD(+) = UDP-beta-L-threo-pentopyranos-4-ulose + CO2 + NADH. It catalyses the reaction UDP-4-amino-4-deoxy-beta-L-arabinose + (6R)-10-formyltetrahydrofolate = UDP-4-deoxy-4-formamido-beta-L-arabinose + (6S)-5,6,7,8-tetrahydrofolate + H(+). It functions in the pathway nucleotide-sugar biosynthesis; UDP-4-deoxy-4-formamido-beta-L-arabinose biosynthesis; UDP-4-deoxy-4-formamido-beta-L-arabinose from UDP-alpha-D-glucuronate: step 1/3. The protein operates within nucleotide-sugar biosynthesis; UDP-4-deoxy-4-formamido-beta-L-arabinose biosynthesis; UDP-4-deoxy-4-formamido-beta-L-arabinose from UDP-alpha-D-glucuronate: step 3/3. It participates in bacterial outer membrane biogenesis; lipopolysaccharide biosynthesis. Functionally, bifunctional enzyme that catalyzes the oxidative decarboxylation of UDP-glucuronic acid (UDP-GlcUA) to UDP-4-keto-arabinose (UDP-Ara4O) and the addition of a formyl group to UDP-4-amino-4-deoxy-L-arabinose (UDP-L-Ara4N) to form UDP-L-4-formamido-arabinose (UDP-L-Ara4FN). The modified arabinose is attached to lipid A and is required for resistance to polymyxin and cationic antimicrobial peptides. This chain is Bifunctional polymyxin resistance protein ArnA, found in Erwinia tasmaniensis (strain DSM 17950 / CFBP 7177 / CIP 109463 / NCPPB 4357 / Et1/99).